Consider the following 198-residue polypeptide: Holliday junction branch migration complex subunit RuvA (198 aa).

A domain I region spans residues 1-63; sequence MYDYIKGQLT…EDAHLLFGFH (63 aa). A domain II region spans residues 64–142; it reads TKDEKDVFLK…EAPQETGNTK (79 aa). The flexible linker stretch occupies residues 143 to 147; it reads ARSNK. The interval 148-198 is domain III; the sequence is AGNTQLDEAIEALLALGYKATELKKIRAFFEGTSETAEQYIKSALKLLMKG.

The protein belongs to the RuvA family. As to quaternary structure, homotetramer. Forms an RuvA(8)-RuvB(12)-Holliday junction (HJ) complex. HJ DNA is sandwiched between 2 RuvA tetramers; dsDNA enters through RuvA and exits via RuvB. An RuvB hexamer assembles on each DNA strand where it exits the tetramer. Each RuvB hexamer is contacted by two RuvA subunits (via domain III) on 2 adjacent RuvB subunits; this complex drives branch migration. In the full resolvosome a probable DNA-RuvA(4)-RuvB(12)-RuvC(2) complex forms which resolves the HJ.

It localises to the cytoplasm. Its function is as follows. The RuvA-RuvB-RuvC complex processes Holliday junction (HJ) DNA during genetic recombination and DNA repair, while the RuvA-RuvB complex plays an important role in the rescue of blocked DNA replication forks via replication fork reversal (RFR). RuvA specifically binds to HJ cruciform DNA, conferring on it an open structure. The RuvB hexamer acts as an ATP-dependent pump, pulling dsDNA into and through the RuvAB complex. HJ branch migration allows RuvC to scan DNA until it finds its consensus sequence, where it cleaves and resolves the cruciform DNA. This is Holliday junction branch migration complex subunit RuvA from Streptococcus pyogenes serotype M18 (strain MGAS8232).